A 98-amino-acid polypeptide reads, in one-letter code: Putative septation protein SpoVG (98 aa).

It belongs to the SpoVG family.

In terms of biological role, could be involved in septation. The chain is Putative septation protein SpoVG from Alkaliphilus metalliredigens (strain QYMF).